The primary structure comprises 193 residues: Achaete-scute homolog 2 (193 aa).

Disordered regions lie at residues 1 to 27 (MDGG…RRPA), 37 to 56 (RRRP…ARRN), and 118 to 177 (GGLR…GALS). The region spanning 50 to 102 (AAVARRNERERNRVKLVNLGFQALRQHVPHGGASKKLSKVETLRSAVEYIRAL) is the bHLH domain. The segment covering 140–150 (AASPSRASSSP) has biased composition (low complexity).

Efficient DNA binding requires dimerization with another basic helix-loop-helix (bHLH) protein. Forms heterodimers with bHLH transcription factor TCF3. May not heterodimerise with bHLH protein HAND1. Expressed in the placenta at a stage between the first and second trimesters and when it matures, at about 32-36 weeks. Expressed in the extravillous trophoblasts, the intermediate trophoblasts, and at lower levels in the cytotrophoblasts and stroma of chorionic villi of the developing placenta. Expressed in follicular T-helper (Tfh) cells.

It is found in the nucleus. Functionally, transcription factor. Binds to E-box motifs 5'-CANNTG-3' in the regulatory elements of target genes, probably as a heterodimer with another basic helix-loop-helix (bHLH) protein such as the transcription factor TCF3. May bind both open and closed chromatin, acting as a pioneer transcription factor to allow other factors to bind and activate lineage-specific genes. Required during post-implantation development for the generation of some differentiated trophoblast cell types. Transcriptional activity of ASCL2 may be antagonised in a subset of trophoblast cells by bHLH transcription factor HAND1, perhaps by competing for dimerization with other bHLH proteins. Involved in differentiation and function of follicular T-helper (Tfh) cells, thereby playing a role in germinal center responses; probably modulates expression of genes involved in Tfh cell function, such as BCL6. May also act as a suppressor of Th1-, Th2- and Th17-cell differentiation. Induces the formation of stem cells in intestinal crypts in vitro, synergistically activating transcription of target genes, such as SOX9, together with TCF4/beta-catenin. May form a bistable transcriptional switch, controlling expression of its own gene together with Wnt/R-spondin signaling, and thereby maintaining stem cell characteristics. Modulates expression of target genes, including perhaps down-regulating EGR1/Krox24 and chemokine CXCL10/Mob-1 and up-regulating CXCR4 and CDKN1C/p57kip2, in Schwann cells. May play a role in reducing proliferation of Schwann cells, perhaps acting via modulation of expression of CDKN1C. May be dispensable for blastocyst formation and later embryonic function. May be involved in the determination of neuronal precursors. The sequence is that of Achaete-scute homolog 2 (ASCL2) from Homo sapiens (Human).